The sequence spans 318 residues: Homoserine kinase (318 aa).

97–107 (PIGSGLGSSAC) lines the ATP pocket.

Belongs to the GHMP kinase family. Homoserine kinase subfamily.

Its subcellular location is the cytoplasm. The enzyme catalyses L-homoserine + ATP = O-phospho-L-homoserine + ADP + H(+). Its pathway is amino-acid biosynthesis; L-threonine biosynthesis; L-threonine from L-aspartate: step 4/5. Catalyzes the ATP-dependent phosphorylation of L-homoserine to L-homoserine phosphate. The protein is Homoserine kinase of Vibrio cholerae serotype O1 (strain M66-2).